The primary structure comprises 37 residues: Disintegrin morulustatin (37 aa).

3 cysteine pairs are disulfide-bonded: Cys12–Cys16, Cys22–Cys36, and Cys24–Cys31.

Belongs to the venom metalloproteinase (M12B) family. P-II subfamily. P-IIa sub-subfamily. As to expression, expressed by the venom gland.

It localises to the secreted. Its function is as follows. Inhibits ADP-induced platelet aggregation in human whole blood in a concentration-dependent manner (IC(50)=89.5 nM). In Crotalus morulus (Tamaulipan rock rattlesnake), this protein is Disintegrin morulustatin.